The chain runs to 214 residues: rRNA methyltransferase 2, mitochondrial (214 aa).

The transit peptide at 1–18 directs the protein to the mitochondrion; it reads MFSTKKSQGNLHKYIQRQ. S-adenosyl-L-methionine is bound by residues 63 to 66, Asp83, 100 to 101, and Asp125; these read PGSW and DI. The active-site Proton acceptor is the Lys169.

It belongs to the class I-like SAM-binding methyltransferase superfamily. RNA methyltransferase RlmE family.

It localises to the mitochondrion. The catalysed reaction is a uridine in rRNA + S-adenosyl-L-methionine = a 2'-O-methyluridine in rRNA + S-adenosyl-L-homocysteine + H(+). Functionally, S-adenosyl-L-methionine-dependent 2'-O-ribose methyltransferase that catalyzes the formation of 2'-O-methyluridine at position 808 (Um808) in the mitochondrial large subunit ribosomal RNA (mtLSU rRNA), a universally conserved modification in the peptidyl transferase domain of the mtLSU rRNA. This activity may require prior 2'-O-methylguanosine modification at position 809 (Gm809) by MRM3. Essential for late-stage assembly of mtLSU required for efficient translation of mitochondrial DNA encoded proteins; methyltransferase activity is not required for this function. Essential for mitochondrial respiratory function. The polypeptide is rRNA methyltransferase 2, mitochondrial (Caenorhabditis elegans).